The primary structure comprises 373 residues: Dual-specificity RNA methyltransferase RlmN (373 aa).

The Proton acceptor role is filled by Glu94. Positions 100-339 (EADRATLCVS…VIVRKTRGDD (240 aa)) constitute a Radical SAM core domain. Cysteines 107 and 344 form a disulfide. Cys114, Cys118, and Cys121 together coordinate [4Fe-4S] cluster. Residues 168-169 (GE), Ser200, 222-224 (SLH), and Asn301 each bind S-adenosyl-L-methionine. Catalysis depends on Cys344, which acts as the S-methylcysteine intermediate.

This sequence belongs to the radical SAM superfamily. RlmN family. [4Fe-4S] cluster serves as cofactor.

The protein localises to the cytoplasm. The enzyme catalyses adenosine(2503) in 23S rRNA + 2 reduced [2Fe-2S]-[ferredoxin] + 2 S-adenosyl-L-methionine = 2-methyladenosine(2503) in 23S rRNA + 5'-deoxyadenosine + L-methionine + 2 oxidized [2Fe-2S]-[ferredoxin] + S-adenosyl-L-homocysteine. It catalyses the reaction adenosine(37) in tRNA + 2 reduced [2Fe-2S]-[ferredoxin] + 2 S-adenosyl-L-methionine = 2-methyladenosine(37) in tRNA + 5'-deoxyadenosine + L-methionine + 2 oxidized [2Fe-2S]-[ferredoxin] + S-adenosyl-L-homocysteine. Specifically methylates position 2 of adenine 2503 in 23S rRNA and position 2 of adenine 37 in tRNAs. m2A2503 modification seems to play a crucial role in the proofreading step occurring at the peptidyl transferase center and thus would serve to optimize ribosomal fidelity. The sequence is that of Dual-specificity RNA methyltransferase RlmN from Tolumonas auensis (strain DSM 9187 / NBRC 110442 / TA 4).